We begin with the raw amino-acid sequence, 807 residues long: Tyrosine-protein kinase receptor torso (807 aa).

Residues 1–28 (MYSEGKLLKVFLIFAGFIIFSLCGEVVS) form the signal peptide. Over 29-370 (QRYPPAPGLL…RAFTPGMLRW (342 aa)) the chain is Extracellular. Cystine bridges form between Cys-46–Cys-61, Cys-81–Cys-203, Cys-210–Cys-239, and Cys-259–Cys-265. 4 N-linked (GlcNAc...) asparagine glycosylation sites follow: Asn-54, Asn-171, Asn-183, and Asn-195. Residues Asn-307, Asn-323, and Asn-344 are each glycosylated (N-linked (GlcNAc...) asparagine). A helical transmembrane segment spans residues 371–391 (VWAGATAGAGCAAGGLLAATL). The Cytoplasmic portion of the chain corresponds to 392–807 (LCCGHRRATS…SPPVIQTKTA (416 aa)). A Protein kinase domain is found at 439-738 (VLLHEVIGEG…PTFPELHQKL (300 aa)). ATP is bound by residues 445 to 453 (IGEGAFGVV) and Lys-468. The active-site Proton acceptor is Asp-607.

Belongs to the protein kinase superfamily. Tyr protein kinase family. Homodimer; disulfide-linked. The cofactor is Mg(2+). Post-translationally, may be auto-phosphorylated on tyrosine residues. In terms of processing, at least one of the 3 cysteine residues Cys-381, Cys-393 or Cys-394 is involved in the formation of interchain disulfide bonds. The disulfide bond sites in the extracellular region are not involved in homodimer formation.

It localises to the cell membrane. It catalyses the reaction L-tyrosyl-[protein] + ATP = O-phospho-L-tyrosyl-[protein] + ADP + H(+). Probable receptor tyrosine kinase. During postembryonic development, involved in the initiation of metamorphosis probably by inducing the production of ecdysone in response to prothoracicotropic hormone (PTTH). Binding to PTTH stimulates activation of canonical MAPK signaling leading to ERK phosphorylation. This chain is Tyrosine-protein kinase receptor torso, found in Bombyx mori (Silk moth).